Here is a 435-residue protein sequence, read N- to C-terminus: ATP-dependent protease ATPase subunit HslU (435 aa).

ATP is bound by residues V18, 60–65 (GVGKTE), D248, E313, and R385.

Belongs to the ClpX chaperone family. HslU subfamily. In terms of assembly, a double ring-shaped homohexamer of HslV is capped on each side by a ring-shaped HslU homohexamer. The assembly of the HslU/HslV complex is dependent on binding of ATP.

Its subcellular location is the cytoplasm. Its function is as follows. ATPase subunit of a proteasome-like degradation complex; this subunit has chaperone activity. The binding of ATP and its subsequent hydrolysis by HslU are essential for unfolding of protein substrates subsequently hydrolyzed by HslV. HslU recognizes the N-terminal part of its protein substrates and unfolds these before they are guided to HslV for hydrolysis. The chain is ATP-dependent protease ATPase subunit HslU from Xanthobacter autotrophicus (strain ATCC BAA-1158 / Py2).